The chain runs to 376 residues: Fructose-1,6-bisphosphate aldolase/phosphatase (376 aa).

Asp-11 serves as the catalytic Proton acceptor; for FBP phosphatase activity. Mg(2+)-binding residues include Asp-11, His-18, Asp-49, and Asp-50. Residue His-18 coordinates beta-D-fructose 1,6-bisphosphate. His-18 lines the dihydroxyacetone phosphate pocket. Tyr-87 contacts beta-D-fructose 1,6-bisphosphate. Gln-91 is a binding site for Mg(2+). Residue 100-101 (GN) coordinates beta-D-fructose 1,6-bisphosphate. Asp-128 is a Mg(2+) binding site. Lys-129 lines the beta-D-fructose 1,6-bisphosphate pocket. Residue Lys-129 participates in dihydroxyacetone phosphate binding. Catalysis depends on Tyr-224, which acts as the Proton donor/acceptor; for FBP aldolase activity. The Mg(2+) site is built by Lys-227, Asp-228, and Asp-229. Lys-227 acts as the Schiff-base intermediate with DHAP; for FBP aldolase activity in catalysis. Beta-D-fructose 1,6-bisphosphate-binding positions include 237-238 (QK), Arg-261, and Tyr-342. Arg-261 serves as a coordination point for dihydroxyacetone phosphate. The tract at residues 357 to 376 (MVPLKDSGPAGTGRAYEDPD) is disordered.

This sequence belongs to the FBP aldolase/phosphatase family. As to quaternary structure, homooctamer; dimer of tetramers. It depends on Mg(2+) as a cofactor.

The catalysed reaction is beta-D-fructose 1,6-bisphosphate + H2O = beta-D-fructose 6-phosphate + phosphate. The enzyme catalyses beta-D-fructose 1,6-bisphosphate = D-glyceraldehyde 3-phosphate + dihydroxyacetone phosphate. Its pathway is carbohydrate biosynthesis; gluconeogenesis. Catalyzes two subsequent steps in gluconeogenesis: the aldol condensation of dihydroxyacetone phosphate (DHAP) and glyceraldehyde-3-phosphate (GA3P) to fructose-1,6-bisphosphate (FBP), and the dephosphorylation of FBP to fructose-6-phosphate (F6P). This is Fructose-1,6-bisphosphate aldolase/phosphatase from Cenarchaeum symbiosum (strain A).